The primary structure comprises 147 residues: MAGDSSLLAAVSLLSACQQSYFAWRVGRARLKHKIAPPAVTGPLEFERIFRAQQNSLEFYPVFIVMLWMAGWYFNQVFAACLGLLYIYARHKYFWGYAEAAEKRITGFRLSLGILTLLPVLAVLGVASRFLNEYLDFHVAKKLRKPF.

3 helical membrane-spanning segments follow: residues 6 to 26, 62 to 82, and 107 to 127; these read SLLA…AWRV, VFIV…AACL, and GFRL…LGVA.

Homotrimer.

The protein resides in the endoplasmic reticulum membrane. It is found in the microsome membrane. The catalysed reaction is RX + glutathione = an S-substituted glutathione + a halide anion + H(+). It carries out the reaction 1-chloro-2,4-dinitrobenzene + glutathione = 2,4-dinitrophenyl-S-glutathione + chloride + H(+). It catalyses the reaction leukotriene C4 = leukotriene A4 + glutathione. The enzyme catalyses (5S)-hydroperoxy-(6E,8Z,11Z,14Z)-eicosatetraenoate + 2 glutathione = (5S)-hydroxy-(6E,8Z,11Z,14Z)-eicosatetraenoate + glutathione disulfide + H2O. Its activity is regulated as follows. Each monomer binds on GSH molecule but only one subunit is catalytically active. Functionally, catalyzes several different glutathione-dependent reactions. Catalyzes the glutathione-dependent reduction of lipid hydroperoxides, such as 5-HPETE. Has glutathione transferase activity, toward xenobiotic electrophiles, such as 1-chloro-2, 4-dinitrobenzene (CDNB). Also catalyzes the conjugation of leukotriene A4 with reduced glutathione to form leukotriene C4 (LTC4). Involved in oxidative DNA damage induced by ER stress and anticancer agents by activating LTC4 biosynthetic machinery in nonimmune cells. In Mus musculus (Mouse), this protein is Microsomal glutathione S-transferase 2.